A 304-amino-acid polypeptide reads, in one-letter code: N-acetylmuramic acid 6-phosphate etherase (304 aa).

In terms of domain architecture, SIS spans 58-221 (IVDRMKQGGR…TTASMVKMGK (164 aa)). Glutamate 86 acts as the Proton donor in catalysis. Residue glutamate 117 is part of the active site.

The protein belongs to the GCKR-like family. MurNAc-6-P etherase subfamily. As to quaternary structure, homodimer.

The catalysed reaction is N-acetyl-D-muramate 6-phosphate + H2O = N-acetyl-D-glucosamine 6-phosphate + (R)-lactate. The protein operates within amino-sugar metabolism; N-acetylmuramate degradation. Functionally, specifically catalyzes the cleavage of the D-lactyl ether substituent of MurNAc 6-phosphate, producing GlcNAc 6-phosphate and D-lactate. This chain is N-acetylmuramic acid 6-phosphate etherase, found in Clostridioides difficile (strain 630) (Peptoclostridium difficile).